The sequence spans 308 residues: tRNA dimethylallyltransferase (308 aa).

An ATP-binding site is contributed by 9–16 (GPTAVGKT). Position 11-16 (11-16 (TAVGKT)) interacts with substrate. Positions 34 to 37 (DSMQ) are interaction with substrate tRNA.

It belongs to the IPP transferase family. Monomer. Requires Mg(2+) as cofactor.

The catalysed reaction is adenosine(37) in tRNA + dimethylallyl diphosphate = N(6)-dimethylallyladenosine(37) in tRNA + diphosphate. Catalyzes the transfer of a dimethylallyl group onto the adenine at position 37 in tRNAs that read codons beginning with uridine, leading to the formation of N6-(dimethylallyl)adenosine (i(6)A). The polypeptide is tRNA dimethylallyltransferase (Lactobacillus delbrueckii subsp. bulgaricus (strain ATCC BAA-365 / Lb-18)).